The following is a 90-amino-acid chain: Protein E18 (90 aa).

The chain crosses the membrane as a helical span at residues 27-47 (PNMFLTILAVVVIIALIIIFV).

It localises to the virion membrane. In terms of biological role, component of the polyhedra envelope. Plays an essential role in the budded virus production. This chain is Protein E18 (E18), found in Autographa californica nuclear polyhedrosis virus (AcMNPV).